A 388-amino-acid chain; its full sequence is Chorismate synthase (388 aa).

Positions 39 and 45 each coordinate NADP(+). FMN contacts are provided by residues Arg-130 to Ser-132, Asn-251 to Ala-252, Gly-296, Lys-311 to Thr-315, and Arg-337.

Belongs to the chorismate synthase family. In terms of assembly, homotetramer. It depends on FMNH2 as a cofactor.

The enzyme catalyses 5-O-(1-carboxyvinyl)-3-phosphoshikimate = chorismate + phosphate. It participates in metabolic intermediate biosynthesis; chorismate biosynthesis; chorismate from D-erythrose 4-phosphate and phosphoenolpyruvate: step 7/7. Its function is as follows. Catalyzes the anti-1,4-elimination of the C-3 phosphate and the C-6 proR hydrogen from 5-enolpyruvylshikimate-3-phosphate (EPSP) to yield chorismate, which is the branch point compound that serves as the starting substrate for the three terminal pathways of aromatic amino acid biosynthesis. This reaction introduces a second double bond into the aromatic ring system. This chain is Chorismate synthase, found in Streptococcus agalactiae serotype V (strain ATCC BAA-611 / 2603 V/R).